Reading from the N-terminus, the 485-residue chain is MTSRTKSSKNLGTIALAGMVVSSIIGGGIFSLPQNMAATAGAGAVILSWILTGFGMFFIANTFRILSTIRPDLKEGIYMYSREGFGPYIGFTIGWGYWLCQIFGNVGYAVITMDALNYFFPPYFQGGNTLPAILGGSILIWVFNFIVLKGIRQASIINVIGTIFKIIPLIIFIILTAFFFKLAVFKTDFWGHAVTKAQPSLGSVSSQLKGTMLVTLWAFIGIEGAVVMSGRAKNPLSVGQATVLGFLGCLTIYILFSLLPFGSLFQHQLANIPNPSTAGVLDILVGKWGEVLMNVGLIIAVLSSWLSWTIIVAEIPFSAAKNGTFPEIFTIENKEKSPSVSLYITSSVMQLAMLLVYFSSNAWNTMLSITGVMVLPAYLASAAFLFKLSKSKTYPKKGSIKAPLAMITGILGVVYSLWLIYAGGLKYLFMALVLLALGIPFYIDAGKKKKNAKTFFAKKEIVGMTFIGLLALTAIFLFSTGRIKI.

Helical transmembrane passes span 12–34, 38–60, 89–111, 126–148, 155–177, 211–230, 243–265, 291–313, 363–385, 400–422, 427–446, and 461–483; these read GTIALAGMVVSSIIGGGIFSLPQ, ATAGAGAVILSWILTGFGMFFIA, IGFTIGWGYWLCQIFGNVGYAVI, GGNTLPAILGGSILIWVFNFIVL, SIINVIGTIFKIIPLIIFIILTA, TMLVTLWAFIGIEGAVVMSG, VLGFLGCLTIYILFSLLPFGSLF, VLMNVGLIIAVLSSWLSWTIIVA, WNTMLSITGVMVLPAYLASAAFL, IKAPLAMITGILGVVYSLWLIYA, YLFMALVLLALGIPFYIDAG, and IVGMTFIGLLALTAIFLFSTGRI.

Belongs to the amino acid-polyamine-organocation (APC) superfamily. Basic amino acid/polyamine antiporter (APA) (TC 2.A.3.2) family.

Its subcellular location is the cell inner membrane. Functionally, catalyzes the exchange of L-arginine for agmatine. The arginine uptake by the bacterium in the macrophage may be a virulence factor against the host innate immune response. The chain is Arginine/agmatine antiporter (aaxC) from Chlamydia pneumoniae (Chlamydophila pneumoniae).